The following is a 393-amino-acid chain: S-adenosylmethionine synthase (393 aa).

Mg(2+) is bound at residue glutamate 9. An ATP-binding site is contributed by histidine 15. Glutamate 43 is a binding site for K(+). L-methionine is bound by residues glutamate 56 and glutamine 99. Residues 167–169 (DGK), 235–238 (SGRF), aspartate 246, 252–253 (RK), alanine 269, lysine 273, and lysine 277 contribute to the ATP site. Aspartate 246 provides a ligand contact to L-methionine. L-methionine is bound at residue lysine 277.

It belongs to the AdoMet synthase family. Homotetramer. It depends on Mn(2+) as a cofactor. Mg(2+) is required as a cofactor. Requires Co(2+) as cofactor. The cofactor is K(+).

It localises to the cytoplasm. The enzyme catalyses L-methionine + ATP + H2O = S-adenosyl-L-methionine + phosphate + diphosphate. The protein operates within amino-acid biosynthesis; S-adenosyl-L-methionine biosynthesis; S-adenosyl-L-methionine from L-methionine: step 1/1. In terms of biological role, catalyzes the formation of S-adenosylmethionine from methionine and ATP. The reaction comprises two steps that are both catalyzed by the same enzyme: formation of S-adenosylmethionine (AdoMet) and triphosphate, and subsequent hydrolysis of the triphosphate. In Solanum palustre (Non-tuber-performing potato), this protein is S-adenosylmethionine synthase (SAMS).